The following is a 533-amino-acid chain: NADH-quinone oxidoreductase subunit N (533 aa).

The next 14 membrane-spanning stretches (helical) occupy residues 13-33 (VWPLLVVFGVAAVGVLVEGFV), 40-60 (LVQAALAIAGVVVALVGTILV), 87-107 (PALFIWGMLLVFALGGALLFA), 141-161 (HTEVYPLMMFALGGMMLFAAA), 164-184 (LLTLFVALEVLSLPLYLLSGL), 200-220 (FMLGAFSSGFFLYGAALVYGF), 243-263 (LLIGIGMLSVGLLFKVGAVPF), 275-295 (PTAVTAFMAAGTKIAAFGAML), 310-330 (QPMLWIIAILTMLVGALIAIV), 337-357 (MLAYSSVAHTGFLLTGVLGVQ), 373-393 (VLFYLVTYGFAVVGAFAVVTL), 417-437 (VAGVFAFFLLSMAGIPLTAGF), 451-471 (GAWPVVIAAVLCSIIAVFFYV), and 502-522 (ATIFVGVAATLVLGVVPGPVL).

This sequence belongs to the complex I subunit 2 family. In terms of assembly, NDH-1 is composed of 14 different subunits. Subunits NuoA, H, J, K, L, M, N constitute the membrane sector of the complex.

Its subcellular location is the cell membrane. It carries out the reaction a quinone + NADH + 5 H(+)(in) = a quinol + NAD(+) + 4 H(+)(out). In terms of biological role, NDH-1 shuttles electrons from NADH, via FMN and iron-sulfur (Fe-S) centers, to quinones in the respiratory chain. The immediate electron acceptor for the enzyme in this species is believed to be a menaquinone. Couples the redox reaction to proton translocation (for every two electrons transferred, four hydrogen ions are translocated across the cytoplasmic membrane), and thus conserves the redox energy in a proton gradient. The sequence is that of NADH-quinone oxidoreductase subunit N from Nocardioides sp. (strain ATCC BAA-499 / JS614).